Here is a 401-residue protein sequence, read N- to C-terminus: Argininosuccinate synthase (401 aa).

An ATP-binding site is contributed by 8–16 (AYSGGLDTS). Tyr85 contributes to the L-citrulline binding site. Gly115 is a binding site for ATP. L-aspartate-binding residues include Thr117, Asn121, and Asp122. Asn121 is a binding site for L-citrulline. Arg125, Ser173, Glu258, and Tyr270 together coordinate L-citrulline.

It belongs to the argininosuccinate synthase family. Type 1 subfamily. As to quaternary structure, homotetramer.

It is found in the cytoplasm. It carries out the reaction L-citrulline + L-aspartate + ATP = 2-(N(omega)-L-arginino)succinate + AMP + diphosphate + H(+). Its pathway is amino-acid biosynthesis; L-arginine biosynthesis; L-arginine from L-ornithine and carbamoyl phosphate: step 2/3. In Staphylococcus aureus (strain Mu3 / ATCC 700698), this protein is Argininosuccinate synthase.